The primary structure comprises 243 residues: Homeobox protein goosecoid isoform B (243 aa).

The segment at residues 148–207 is a DNA-binding region (homeobox); that stretch reads KRRHRTIFTDEQLEALENLFQETKYPDVGTREQLARRVHLREEKVEVWFKNRRAKWRRQK. Residues 201–243 are disordered; that stretch reads AKWRRQKRSSSEESENAQKWNKSSKNSAEKRDEQAKSDLDSDS. The span at 217 to 226 shows a compositional bias: polar residues; the sequence is AQKWNKSSKN. The segment covering 227 to 243 has biased composition (basic and acidic residues); that stretch reads SAEKRDEQAKSDLDSDS.

Belongs to the paired homeobox family. Bicoid subfamily.

The protein resides in the nucleus. Its function is as follows. Plays a central role in executing Spemann's organizer phenomenon (the dorsal blastopore lip of the early Xenopus laevis gastrula can organize a complete secondary body axis when transplanted to another embryo). The protein is Homeobox protein goosecoid isoform B (gsc-b) of Xenopus laevis (African clawed frog).